The primary structure comprises 652 residues: MVRGPAGAWAVLGPLLWGCGLALLQGGMLYPQESRSRERKELNGLWSFRADFSDNRRQGFEQQWYRKPLRESGPTLDMPVPSSFNDISQDGRLRSFIGWVWYEREAILPQRWTQDLGTRVVLRISSAHYYAIVWVNGVHVTEHEGGHLPFEADISKLVQTGPLSSCRITIAINNTLSPHTLPPGTILYKTDTSKYPKGYFVQNTNFDFFNYAGLHRPVLLYTTPTAYIDDITVTTDVDQDTGLVNYQIFVQGSDHFQLEVHLLDEEGRVVAKGTGGQGQLQVPSAHLWWPYLMHERPAYLYSLEVKLTAQTSAGPLSDFYTLPVGIRTVAVTERQFLINGKPFYFHGVNKHEDADIRGKGFDWSLLVKDFNLLRWLGANAFRTSHYPYAEEVMQLCDRYGIVVIDESPGVGIVLAQSFSNASLQHHLEVMEEMVRRDKNHPAVVMWSVANEPSSFLEQAAYYFKMLIGHTKALDPSRPVTFVTSSSYEKDLGVPYVDVICVNSYYSWYHDYGHMEVIQLQLATQFERWHEAYQKPIIQSEYGAETIIGFHEDPPLMFSEEYQKGLLQQYHVILDQKRKEYVVGELIWNFADFMTDQSPQRAIGNRKGIFTRQRQPKSAAFLLRERYWKLANETRYLQSAVMSQCVGNSPFTV.

Positions 1-22 (MVRGPAGAWAVLGPLLWGCGLA) are cleaved as a signal peptide. Residues Asn173 and Asn420 are each glycosylated (N-linked (GlcNAc...) asparagine). Residue Glu451 is the Proton donor of the active site. Asn631 carries an N-linked (GlcNAc...) asparagine glycan.

Belongs to the glycosyl hydrolase 2 family. Homotetramer.

It localises to the lysosome. The enzyme catalyses a beta-D-glucuronoside + H2O = D-glucuronate + an alcohol. With respect to regulation, inhibited by L-aspartic acid. Functionally, plays an important role in the degradation of dermatan and keratan sulfates. This is Beta-glucuronidase (GUSB) from Sus scrofa (Pig).